The chain runs to 167 residues: Ribosome maturation factor RimM (167 aa).

One can recognise a PRC barrel domain in the interval 93–165; it reads KGVYYDFQLI…QVIIDPIPGL (73 aa).

It belongs to the RimM family. Binds ribosomal protein uS19.

It is found in the cytoplasm. An accessory protein needed during the final step in the assembly of 30S ribosomal subunit, possibly for assembly of the head region. Essential for efficient processing of 16S rRNA. May be needed both before and after RbfA during the maturation of 16S rRNA. It has affinity for free ribosomal 30S subunits but not for 70S ribosomes. The sequence is that of Ribosome maturation factor RimM from Dehalococcoides mccartyi (strain ATCC BAA-2266 / KCTC 15142 / 195) (Dehalococcoides ethenogenes (strain 195)).